The sequence spans 168 residues: DNA damage-inducible transcript 3 protein (168 aa).

The tract at residues 10–18 is interaction with TRIB3; that stretch reads LETVSSWEL. The segment at 10–26 is N-terminal; that stretch reads LETVSSWELEAWYEDLQ. 4 positions are modified to phosphoserine; by CK2: Ser14, Ser15, Ser30, and Ser31. Positions 30–43 are enriched in polar residues; that stretch reads SSDENGGPYSSSLG. Positions 30 to 168 are disordered; that stretch reads SSDENGGPYS…DRPHVNLQQV (139 aa). Residues 74 to 87 are compositionally biased toward low complexity; it reads SSSQSPRSPDSSQS. A phosphoserine; by MAPK14 mark is found at Ser78 and Ser81. A bZIP domain is found at 98–161; the sequence is GRTRKRKQSG…EATRPGSDRP (64 aa). The tract at residues 101–129 is basic motif; the sequence is RKRKQSGQCPARGTGKQRMKEKEQENERK. Residues 118 to 162 show a composition bias toward basic and acidic residues; it reads RMKEKEQENERKVAQLAEENERLKQEIERLTREVEATRPGSDRPH. A leucine-zipper region spans residues 133–147; sequence LAEENERLKQEIERL.

It belongs to the bZIP family. As to quaternary structure, heterodimer. Interacts with TCF7L2/TCF4, EP300/P300, HDAC1, HDAC5 and HDAC6. Interacts with TRIB3 which blocks its association with EP300/P300. Interacts with FOXO3, CEBPB and ATF4. Post-translationally, ubiquitinated, leading to its degradation by the proteasome. Phosphorylation at serine residues by MAPK14 enhances its transcriptional activation activity while phosphorylation at serine residues by CK2 inhibits its transcriptional activation activity.

The protein resides in the cytoplasm. Its subcellular location is the nucleus. Multifunctional transcription factor in ER stress response. Plays an essential role in the response to a wide variety of cell stresses and induces cell cycle arrest and apoptosis in response to ER stress. Plays a dual role both as an inhibitor of CCAAT/enhancer-binding protein (C/EBP) function and as an activator of other genes. Acts as a dominant-negative regulator of C/EBP-induced transcription: dimerizes with members of the C/EBP family, impairs their association with C/EBP binding sites in the promoter regions, and inhibits the expression of C/EBP regulated genes. Positively regulates the transcription of TRIB3, IL6, IL8, IL23, TNFRSF10B/DR5, PPP1R15A/GADD34, BBC3/PUMA, BCL2L11/BIM and ERO1L. Negatively regulates; expression of BCL2 and MYOD1, ATF4-dependent transcriptional activation of asparagine synthetase (ASNS), CEBPA-dependent transcriptional activation of hepcidin (HAMP) and CEBPB-mediated expression of peroxisome proliferator-activated receptor gamma (PPARG). Inhibits the canonical Wnt signaling pathway by binding to TCF7L2/TCF4, impairing its DNA-binding properties and repressing its transcriptional activity. Plays a regulatory role in the inflammatory response through the induction of caspase-11 (CASP4/CASP11) which induces the activation of caspase-1 (CASP1) and both these caspases increase the activation of pro-IL1B to mature IL1B which is involved in the inflammatory response. This Cricetulus griseus (Chinese hamster) protein is DNA damage-inducible transcript 3 protein (DDIT3).